The primary structure comprises 322 residues: Tetraacyldisaccharide 4'-kinase (322 aa).

54 to 61 (SVGGTGKT) serves as a coordination point for ATP.

This sequence belongs to the LpxK family.

The catalysed reaction is a lipid A disaccharide + ATP = a lipid IVA + ADP + H(+). It participates in glycolipid biosynthesis; lipid IV(A) biosynthesis; lipid IV(A) from (3R)-3-hydroxytetradecanoyl-[acyl-carrier-protein] and UDP-N-acetyl-alpha-D-glucosamine: step 6/6. In terms of biological role, transfers the gamma-phosphate of ATP to the 4'-position of a tetraacyldisaccharide 1-phosphate intermediate (termed DS-1-P) to form tetraacyldisaccharide 1,4'-bis-phosphate (lipid IVA). This Francisella philomiragia subsp. philomiragia (strain ATCC 25017 / CCUG 19701 / FSC 153 / O#319-036) protein is Tetraacyldisaccharide 4'-kinase.